The primary structure comprises 101 residues: Urease subunit beta (101 aa).

The protein belongs to the urease beta subunit family. In terms of assembly, heterotrimer of UreA (gamma), UreB (beta) and UreC (alpha) subunits. Three heterotrimers associate to form the active enzyme.

Its subcellular location is the cytoplasm. The catalysed reaction is urea + 2 H2O + H(+) = hydrogencarbonate + 2 NH4(+). Its pathway is nitrogen metabolism; urea degradation; CO(2) and NH(3) from urea (urease route): step 1/1. This Dinoroseobacter shibae (strain DSM 16493 / NCIMB 14021 / DFL 12) protein is Urease subunit beta.